Reading from the N-terminus, the 353-residue chain is Fe(3+) ions import ATP-binding protein FbpC (353 aa).

The region spanning 9–239 is the ABC transporter domain; the sequence is VTFENVTKKF…PASAFIADFM (231 aa). Residue 41 to 48 coordinates ATP; sequence GLSGCGKT.

The protein belongs to the ABC transporter superfamily. Fe(3+) ion importer (TC 3.A.1.10) family. In terms of assembly, the complex is composed of two ATP-binding proteins (FbpC), two transmembrane proteins (FbpB) and a solute-binding protein (FbpA).

Its subcellular location is the cell inner membrane. The enzyme catalyses Fe(3+)(out) + ATP + H2O = Fe(3+)(in) + ADP + phosphate + H(+). Part of the ABC transporter complex FbpABC involved in Fe(3+) ions import. Responsible for energy coupling to the transport system. This Brucella melitensis biotype 1 (strain ATCC 23456 / CCUG 17765 / NCTC 10094 / 16M) protein is Fe(3+) ions import ATP-binding protein FbpC.